The following is a 105-amino-acid chain: Nucleoid-associated protein SaurJH1_0513 (105 aa).

The segment at 1 to 33 (MRGGGNMQQMMKQMQKMQKKMAQEQKKLKEERI) is disordered. Over residues 7–16 (MQQMMKQMQK) the composition is skewed to low complexity. Residues 21–33 (MAQEQKKLKEERI) are compositionally biased toward basic and acidic residues.

This sequence belongs to the YbaB/EbfC family. In terms of assembly, homodimer.

It localises to the cytoplasm. The protein resides in the nucleoid. In terms of biological role, binds to DNA and alters its conformation. May be involved in regulation of gene expression, nucleoid organization and DNA protection. In Staphylococcus aureus (strain JH1), this protein is Nucleoid-associated protein SaurJH1_0513.